We begin with the raw amino-acid sequence, 166 residues long: MFPMVTEFMNYGQQTVRAARYIGQGFMITLSHANRLPVTIQYPYEKLITSERFRGRIHFEFDKCIACEVCVRVCPIDLPVVDWKLETDIRKKRLLNYSIDFGICIFCGNCVEYCPTNCLSMTEEYELSTYDRHELNYNQIALGRLPMSIIDDYTIRTIFNLPERKT.

2 4Fe-4S ferredoxin-type domains span residues 55–84 and 95–124; these read GRIH…VDWK and LNYS…MTEE. [4Fe-4S] cluster is bound by residues C64, C67, C70, C74, C104, C107, C110, and C114.

It belongs to the complex I 23 kDa subunit family. As to quaternary structure, NDH is composed of at least 16 different subunits, 5 of which are encoded in the nucleus. It depends on [4Fe-4S] cluster as a cofactor.

The protein localises to the plastid. The protein resides in the chloroplast thylakoid membrane. It catalyses the reaction a plastoquinone + NADH + (n+1) H(+)(in) = a plastoquinol + NAD(+) + n H(+)(out). The catalysed reaction is a plastoquinone + NADPH + (n+1) H(+)(in) = a plastoquinol + NADP(+) + n H(+)(out). In terms of biological role, NDH shuttles electrons from NAD(P)H:plastoquinone, via FMN and iron-sulfur (Fe-S) centers, to quinones in the photosynthetic chain and possibly in a chloroplast respiratory chain. The immediate electron acceptor for the enzyme in this species is believed to be plastoquinone. Couples the redox reaction to proton translocation, and thus conserves the redox energy in a proton gradient. In Parthenium hysterophorus (Santa Maria feverfew), this protein is NAD(P)H-quinone oxidoreductase subunit I, chloroplastic.